The primary structure comprises 644 residues: Threonine--tRNA ligase (644 aa).

The TGS domain occupies 3-64 (EMIRITFPDG…QEDGSISIIT (62 aa)). The tract at residues 245-542 (DHRKLGKELE…LIEEYKGAFP (298 aa)) is catalytic. Cys-338, His-389, and His-519 together coordinate Zn(2+).

Belongs to the class-II aminoacyl-tRNA synthetase family. Homodimer. Zn(2+) serves as cofactor.

It localises to the cytoplasm. The enzyme catalyses tRNA(Thr) + L-threonine + ATP = L-threonyl-tRNA(Thr) + AMP + diphosphate + H(+). Functionally, catalyzes the attachment of threonine to tRNA(Thr) in a two-step reaction: L-threonine is first activated by ATP to form Thr-AMP and then transferred to the acceptor end of tRNA(Thr). Also edits incorrectly charged L-seryl-tRNA(Thr). The polypeptide is Threonine--tRNA ligase (Geobacillus sp. (strain WCH70)).